The chain runs to 1813 residues: Nonribosomal peptide synthetase 1 (1813 aa).

Residues 89–494 form an adenylation region; sequence EKARRDPSRQ…GRGDQQVKLR (406 aa). The Carrier 1 domain maps to 624-699; the sequence is EPQSERERQL…ELAITLKHSD (76 aa). O-(pantetheine 4'-phosphoryl)serine is present on S660. The condensation 1 stretch occupies residues 738 to 1159; that stretch reads DVYPCTTLQE…LPMTDDELAE (422 aa). The 77-residue stretch at 1282-1358 folds into the Carrier 2 domain; sequence QVTTPKQQKL…DMADIAKESL (77 aa). S1319 is subject to O-(pantetheine 4'-phosphoryl)serine. Positions 1427 to 1806 are condensation 2; it reads FYLDAAVDQS…STLFQTDVME (380 aa).

The protein belongs to the NRP synthetase family.

It functions in the pathway siderophore biosynthesis. Its function is as follows. Nonribosomal peptide synthetase; part of the gene cluster that mediates the biosynthesis of hydroxamate-containing siderophores that play a critical role in virulence via intracellular iron acquisition during macrophage infection. The protein is Nonribosomal peptide synthetase 1 of Ajellomyces capsulatus (Darling's disease fungus).